Consider the following 898-residue polypeptide: Vacuolar protein sorting-associated protein 41 homolog (898 aa).

A compositionally biased stretch (basic and acidic residues) spans Met1 to Glu10. Positions Met1–Glu35 are disordered. One copy of the CHCR repeat lies at Leu614–Gln756. The segment at Cys835–Ser890 adopts an RING-type; atypical zinc-finger fold.

Belongs to the VPS41 family. Probable component of the homotypic fusion and vacuole protein sorting (HOPS) complex consisting of the core class C Vps proteins vps-11, vps-16, vps-18, and which further associates with vps-33.1, vps-39 and vps-41.

It localises to the endosome membrane. The protein resides in the late endosome. The protein localises to the lysosome. Its subcellular location is the golgi apparatus. It is found in the trans-Golgi network. It localises to the early endosome. The protein resides in the cytoplasmic vesicle. The protein localises to the clathrin-coated vesicle. Functionally, plays a role in vesicle-mediated protein trafficking to lysosomal compartments including the endocytic membrane transport pathways. Believed to act in part as a core component of the putative HOPS endosomal tethering complex which is proposed to be involved in the rab-5-to-rab-7 endosome conversion probably implicating sand-1, and via binding SNAREs and SNARE complexes to mediate tethering and docking events during SNARE-mediated membrane fusion. The HOPS complex is proposed to be recruited to rab-7 on the late endosomal membrane and to regulate late endocytic, phagocytic and autophagic traffic towards lysosomes. Within the HOPS complex, contributes to the normal development of gut granules in the adult intestine. May mediate the tethering of autophagosomes with lysosomes. Has a role in the negative regulation of apoptosis. Required for uptake of exogenous dsRNA which is used in experimental RNA silencing. In Caenorhabditis briggsae, this protein is Vacuolar protein sorting-associated protein 41 homolog.